Here is a 258-residue protein sequence, read N- to C-terminus: Venom plasminogen activator Haly-PA (258 aa).

The signal sequence occupies residues 1–18 (MALIRVLANLLILQLSYA). A propeptide spanning residues 19–24 (QKSSEL) is cleaved from the precursor. Residues 25–249 (VVGGDECNIN…HLDWIKSIIA (225 aa)) enclose the Peptidase S1 domain. Cystine bridges form between Cys31–Cys163, Cys50–Cys66, Cys98–Cys256, Cys142–Cys210, Cys174–Cys189, and Cys200–Cys225. Asn44 carries N-linked (GlcNAc...) asparagine glycosylation. Catalysis depends on charge relay system residues His65 and Asp110. The active-site Charge relay system is the Ser204.

The protein belongs to the peptidase S1 family. Snake venom subfamily. In terms of assembly, monomer. Glycosylated. In terms of tissue distribution, expressed by the venom gland.

It localises to the secreted. In terms of biological role, snake venom serine protease that activates plasminogen. Displays indirect fibrino(geno)lytic activity through conversion of plasminogen to plasmin. Shows a preferential cleavage at Arg-|-Xaa instead of Lys-|-Xaa bonds. The sequence is that of Venom plasminogen activator Haly-PA from Gloydius brevicauda (Korean slamosa snake).